Reading from the N-terminus, the 469-residue chain is Probable lysophospholipase BODYGUARD 1 (469 aa).

Positions 1–45 are cleaved as a signal peptide; the sequence is MGFSRSLNRTVGVFVFFILDIVDFLLCFTYKTLDFFFESEWKPCY. C46 is lipidated: N-palmitoyl cysteine. Residues 185 to 439 enclose the AB hydrolase-1 domain; that stretch reads VVFIHGFLSS…IHVVPDKDHI (255 aa). Residue H189 is part of the active site. S263 acts as the Nucleophile in catalysis. Active-site charge relay system residues include D410 and H438.

As to expression, expressed exclusively in protodermal and epidermal cells of all organs, especially on adaxial sides.

It localises to the cell membrane. The protein resides in the secreted. It is found in the cell wall. In terms of biological role, controls cuticle development and morphogenesis, by promoting cutin and suberin monomers loading. Involved in the regulation of abscissic acid (ABA) biosynthesis in response to osmotic stress. Plays an important role in osmotic stress and drought resistance. Required to ensure a reduced permeability of aerial tissue, thus preventing transpiration. Regulates lateral root hair development. Its function is as follows. Required for infection by the pathogenic necrotrophic fungus Botrytis cinerea, probably by regulating structural traits of the cuticle. This is Probable lysophospholipase BODYGUARD 1 from Arabidopsis thaliana (Mouse-ear cress).